Here is a 149-residue protein sequence, read N- to C-terminus: Arginine repressor (149 aa).

The protein belongs to the ArgR family.

The protein resides in the cytoplasm. It functions in the pathway amino-acid biosynthesis; L-arginine biosynthesis [regulation]. Functionally, regulates arginine biosynthesis genes. The polypeptide is Arginine repressor (Listeria monocytogenes serotype 4b (strain F2365)).